A 217-amino-acid chain; its full sequence is Chaperone protein TorD (217 aa).

It belongs to the TorD/DmsD family. TorD subfamily.

It is found in the cytoplasm. Functionally, involved in the biogenesis of TorA. Acts on TorA before the insertion of the molybdenum cofactor and, as a result, probably favors a conformation of the apoenzyme that is competent for acquiring the cofactor. The chain is Chaperone protein TorD from Shewanella oneidensis (strain ATCC 700550 / JCM 31522 / CIP 106686 / LMG 19005 / NCIMB 14063 / MR-1).